The chain runs to 303 residues: MSLKNEKIAVLFGGVSAEREISLNSGKSVFEALQSLGYNVEAIDTKEFPIEKLKEKGIQRVFNILHGGIGENGVLQGALEQLGIPYTGCGVMASAITLDKFRTKLLWNAVGLPTAAMEVVRRGQAVNSDEIIAKLGLPLFVKPASEGSSVGVSKVKTAEQLLPAIEEALKYDSIVLVEENLAGAEYSVPVLDGEVLPAVQIIPDGEFYDYHAKYISDNTQYVVPALNADRQAEVAKLVKQAYDVVGCRGWSRIDVMEDGEGNFRLVEVNTCPGMTSHSIFPKSAATVGYSFERLVERVLELSA.

One can recognise an ATP-grasp domain in the interval 104-300; the sequence is KLLWNAVGLP…FERLVERVLE (197 aa). 132–187 contacts ATP; it reads IAKLGLPLFVKPASEGSSVGVSKVKTAEQLLPAIEEALKYDSIVLVEENLAGAEYS. Positions 254, 267, and 269 each coordinate Mg(2+).

This sequence belongs to the D-alanine--D-alanine ligase family. Mg(2+) serves as cofactor. The cofactor is Mn(2+).

It is found in the cytoplasm. It carries out the reaction 2 D-alanine + ATP = D-alanyl-D-alanine + ADP + phosphate + H(+). It participates in cell wall biogenesis; peptidoglycan biosynthesis. In terms of biological role, cell wall formation. This chain is D-alanine--D-alanine ligase, found in Glaesserella parasuis serovar 5 (strain SH0165) (Haemophilus parasuis).